Reading from the N-terminus, the 476-residue chain is Probable G-protein coupled receptor No9 (476 aa).

Over 1–36 (MEGPPLSPAPADNVTLNVSCGRPATLFDWADHRLIS) the chain is Extracellular. Residues Asn-13 and Asn-17 are each glycosylated (N-linked (GlcNAc...) asparagine). A helical transmembrane segment spans residues 37–60 (LLALAFLNLMVVAGNLLVVMAVFV). At 61-69 (HSKLRTVTN) the chain is on the cytoplasmic side. A helical membrane pass occupies residues 70 to 93 (LFIVSLACADLLVGMLVLPFSATL). Over 94 to 103 (EVLDVWLYGD) the chain is Extracellular. The chain crosses the membrane as a helical span at residues 104-127 (VWCSVWLAVDVWMCTSSILNLCAI). A disulfide bridge connects residues Cys-106 and Cys-192. The Cytoplasmic segment spans residues 128–152 (SLDRYLAVSQPISYPSLMSTRRAKQ). Residues 153 to 172 (LIAAVWVLSFVICFPPLVGW) form a helical membrane-spanning segment. Residues 173-200 (NDRPGTLIGSRGSSACRLTCELTNERGY) are Extracellular-facing. A helical membrane pass occupies residues 201–221 (VIYSALGSFFLPSTVMLFFYG). The Cytoplasmic segment spans residues 222-375 (RIYRTAVSTT…FRMETKAAKT (154 aa)). The segment covering 266–278 (AAAGGARAHGQVR) has biased composition (low complexity). Disordered regions lie at residues 266–293 (AAAG…NKPS) and 317–351 (DSRP…PRFI). Residues 376–396 (VGIIVGLFILCWLPFFVCYLV) traverse the membrane as a helical segment. Topologically, residues 397–406 (RGFCADCVPP) are extracellular. A helical membrane pass occupies residues 407-430 (LLFSVFFWLGYCNSAVNPCVYALC). Residues 431–476 (SRDFRFAFSSILCKCVCRRGAMERRFRRTLLVGNRSQTEEDCEVAD) are Cytoplasmic-facing.

The protein belongs to the G-protein coupled receptor 1 family.

The protein resides in the cell membrane. Orphan G-protein coupled receptor. The protein is Probable G-protein coupled receptor No9 of Amphibalanus amphitrite (Striped barnacle).